We begin with the raw amino-acid sequence, 777 residues long: Protein translocase subunit SecA (777 aa).

Residues glutamine 94, glycine 112–threonine 116, and aspartate 501 contribute to the ATP site.

Belongs to the SecA family. Monomer and homodimer. Part of the essential Sec protein translocation apparatus which comprises SecA, SecYEG and auxiliary proteins SecDF. Other proteins may also be involved.

It localises to the cell membrane. Its subcellular location is the cytoplasm. The enzyme catalyses ATP + H2O + cellular proteinSide 1 = ADP + phosphate + cellular proteinSide 2.. Functionally, part of the Sec protein translocase complex. Interacts with the SecYEG preprotein conducting channel. Has a central role in coupling the hydrolysis of ATP to the transfer of proteins into and across the cell membrane, serving as an ATP-driven molecular motor driving the stepwise translocation of polypeptide chains across the membrane. This chain is Protein translocase subunit SecA, found in Mycobacterium avium (strain 104).